The primary structure comprises 549 residues: Chaperonin GroEL (549 aa).

Residues 29–32 (TLGP), K50, 86–90 (DGTTT), G414, 477–479 (NAA), and D493 each bind ATP.

The protein belongs to the chaperonin (HSP60) family. As to quaternary structure, forms a cylinder of 14 subunits composed of two heptameric rings stacked back-to-back. Interacts with the co-chaperonin GroES.

It is found in the cytoplasm. The enzyme catalyses ATP + H2O + a folded polypeptide = ADP + phosphate + an unfolded polypeptide.. Functionally, together with its co-chaperonin GroES, plays an essential role in assisting protein folding. The GroEL-GroES system forms a nano-cage that allows encapsulation of the non-native substrate proteins and provides a physical environment optimized to promote and accelerate protein folding. This Geotalea uraniireducens (strain Rf4) (Geobacter uraniireducens) protein is Chaperonin GroEL.